Here is a 191-residue protein sequence, read N- to C-terminus: Lipid A 1-phosphatase (191 aa).

Transmembrane regions (helical) follow at residues 22 to 42, 60 to 80, 117 to 137, 145 to 162, and 164 to 184; these read LLAL…PKVP, FIPT…VGLF, GNFN…AFLM, YLWL…RIYL, and MHTI…VGLF.

It belongs to the lipid A LpxE 1-phosphatase family.

The protein localises to the cell inner membrane. It participates in bacterial outer membrane biogenesis; LPS lipid A biosynthesis. Removes the 1-phosphate group from tetra- and probably hexaacylated lipid A species. Absence of the 1-phosphate group renders the bacteria partially resistant to host-derived cationic antimicrobial peptides (CAMP), allowing it to camouflage itself from the host innate immune response, and plays a role in the long-term colonization of the host's stomach. In Helicobacter pylori (strain J99 / ATCC 700824) (Campylobacter pylori J99), this protein is Lipid A 1-phosphatase.